The sequence spans 129 residues: Small ribosomal subunit protein uS12 (129 aa).

Positions 1–25 are disordered; that stretch reads MPTYNQLVRFGRKSKTRKTKSPALE. Basic residues predominate over residues 10 to 20; that stretch reads FGRKSKTRKTK. Residue aspartate 89 is modified to 3-methylthioaspartic acid. The disordered stretch occupies residues 110-129; the sequence is RKQGRSRYGAPSKQVAVTKK.

It belongs to the universal ribosomal protein uS12 family. As to quaternary structure, part of the 30S ribosomal subunit. Contacts proteins S8 and S17. May interact with IF1 in the 30S initiation complex.

Functionally, with S4 and S5 plays an important role in translational accuracy. Its function is as follows. Interacts with and stabilizes bases of the 16S rRNA that are involved in tRNA selection in the A site and with the mRNA backbone. Located at the interface of the 30S and 50S subunits, it traverses the body of the 30S subunit contacting proteins on the other side and probably holding the rRNA structure together. The combined cluster of proteins S8, S12 and S17 appears to hold together the shoulder and platform of the 30S subunit. The polypeptide is Small ribosomal subunit protein uS12 (Rickettsia canadensis (strain McKiel)).